The chain runs to 292 residues: tRNA pseudouridine synthase B (292 aa).

Aspartate 38 (nucleophile) is an active-site residue.

The protein belongs to the pseudouridine synthase TruB family. Type 1 subfamily.

It catalyses the reaction uridine(55) in tRNA = pseudouridine(55) in tRNA. Functionally, responsible for synthesis of pseudouridine from uracil-55 in the psi GC loop of transfer RNAs. The sequence is that of tRNA pseudouridine synthase B from Gloeobacter violaceus (strain ATCC 29082 / PCC 7421).